We begin with the raw amino-acid sequence, 155 residues long: Ribosomal RNA large subunit methyltransferase H (155 aa).

Residues L72, G103, and 122-127 (LSDLTL) contribute to the S-adenosyl-L-methionine site.

Belongs to the RNA methyltransferase RlmH family. Homodimer.

It localises to the cytoplasm. It carries out the reaction pseudouridine(1915) in 23S rRNA + S-adenosyl-L-methionine = N(3)-methylpseudouridine(1915) in 23S rRNA + S-adenosyl-L-homocysteine + H(+). In terms of biological role, specifically methylates the pseudouridine at position 1915 (m3Psi1915) in 23S rRNA. The polypeptide is Ribosomal RNA large subunit methyltransferase H (Albidiferax ferrireducens (strain ATCC BAA-621 / DSM 15236 / T118) (Rhodoferax ferrireducens)).